Here is a 439-residue protein sequence, read N- to C-terminus: 3-phosphoshikimate 1-carboxyvinyltransferase (439 aa).

Positions 31, 32, and 36 each coordinate 3-phosphoshikimate. Phosphoenolpyruvate is bound at residue K31. Residues G103 and R131 each coordinate phosphoenolpyruvate. 3-phosphoshikimate is bound by residues S175, Q177, D322, and K349. Residue Q177 coordinates phosphoenolpyruvate. The active-site Proton acceptor is D322. Residues R353 and R397 each coordinate phosphoenolpyruvate.

Belongs to the EPSP synthase family. In terms of assembly, monomer.

The protein resides in the cytoplasm. It carries out the reaction 3-phosphoshikimate + phosphoenolpyruvate = 5-O-(1-carboxyvinyl)-3-phosphoshikimate + phosphate. It functions in the pathway metabolic intermediate biosynthesis; chorismate biosynthesis; chorismate from D-erythrose 4-phosphate and phosphoenolpyruvate: step 6/7. Catalyzes the transfer of the enolpyruvyl moiety of phosphoenolpyruvate (PEP) to the 5-hydroxyl of shikimate-3-phosphate (S3P) to produce enolpyruvyl shikimate-3-phosphate and inorganic phosphate. This Clostridium tetani (strain Massachusetts / E88) protein is 3-phosphoshikimate 1-carboxyvinyltransferase.